Consider the following 29-residue polypeptide: Cyclotide mden-A (29 aa).

A cross-link (cyclopeptide (Gly-Asn)) is located at residues 1–29 (GIPTCGETCTLGTCNTPGCTCSWPICTKN). 3 disulfide bridges follow: cysteine 5–cysteine 19, cysteine 9–cysteine 21, and cysteine 14–cysteine 26.

Belongs to the cyclotide family. Moebius subfamily. Post-translationally, this is a cyclic peptide.

In terms of biological role, probably participates in a plant defense mechanism. This is Cyclotide mden-A from Melicytus dentatus (Tree violet).